The sequence spans 315 residues: Ester hydrolase C11orf54 homolog (315 aa).

Positions 266, 268, and 278 each coordinate Zn(2+).

Monomer. It depends on Zn(2+) as a cofactor.

It is found in the nucleus. The protein localises to the cytoplasm. Its function is as follows. Exhibits ester hydrolase activity on the substrate p-nitrophenyl acetate, in vitro. Regulates DNA damage and repair by regulating HIF1A degradation via chaperone-mediated autophagy (CMA). The chain is Ester hydrolase C11orf54 homolog from Mus musculus (Mouse).